Reading from the N-terminus, the 548-residue chain is Phenylalanine--tRNA ligase beta subunit (548 aa).

A B5 domain is found at 271-346 (LSEAAAKLDP…ISIGYEALGP (76 aa)). Positions 324, 330, 333, and 334 each coordinate Mg(2+).

It belongs to the phenylalanyl-tRNA synthetase beta subunit family. Type 2 subfamily. As to quaternary structure, tetramer of two alpha and two beta subunits. It depends on Mg(2+) as a cofactor.

Its subcellular location is the cytoplasm. It catalyses the reaction tRNA(Phe) + L-phenylalanine + ATP = L-phenylalanyl-tRNA(Phe) + AMP + diphosphate + H(+). This chain is Phenylalanine--tRNA ligase beta subunit, found in Aeropyrum pernix (strain ATCC 700893 / DSM 11879 / JCM 9820 / NBRC 100138 / K1).